The following is a 784-amino-acid chain: Ribosome biogenesis protein BOP1 homolog (784 aa).

Basic residues predominate over residues 1–11 (MTKKLALKRKG). The segment at 1–159 (MTKKLALKRK…DSDTSDEEDI (159 aa)) is disordered. Composition is skewed to acidic residues over residues 27–36 (SENEEEEEDL), 45–54 (EDSTDDEGID), 62–73 (SEELQFESDEEG), and 84–111 (AEED…EDEE). Residues 112-123 (KDSKLKQSDDKP) show a composition bias toward basic and acidic residues. The segment covering 124–133 (SSSGAASKKA) has biased composition (low complexity). The segment covering 138-148 (LSKRDTSKPEY) has biased composition (basic and acidic residues). Positions 149 to 158 (QDSDTSDEED) are enriched in acidic residues. WD repeat units follow at residues 445–486 (GHTD…RTIE), 488–526 (DEVV…KVLV), 570–612 (THFK…SQIP), 615–653 (KSKG…LVKK), 656–695 (TNSK…KPYQ), 699–738 (LHRN…DLLQ), and 754–784 (RDEF…RLYT).

This sequence belongs to the WD repeat BOP1/ERB1 family.

Its subcellular location is the nucleus. The protein resides in the nucleolus. It localises to the nucleoplasm. Its function is as follows. Required for maturation of ribosomal RNAs and formation of the large ribosomal subunit. In Drosophila erecta (Fruit fly), this protein is Ribosome biogenesis protein BOP1 homolog.